The following is a 161-amino-acid chain: Protein PLASTID TRANSCRIPTIONALLY ACTIVE 7 (161 aa).

Residues 1–32 (MASFTCSSPSSILPIIDTRSGNLRCTFQSQVS) constitute a chloroplast transit peptide.

In terms of assembly, component of the transcriptionally active chromosome (TAC) complexes. Interacts with FLN1, PTAC10, PTAC12/HMR/PAP5 and PTAC14. Binds to SL1/MTERF3. Mostly expressed in leaves, flowers and seedlings, and, to a lower extent, in roots and stems.

It localises to the plastid. Its subcellular location is the chloroplast. Functionally, essential for chloroplast development, especially for thylakoid formation. Involved in plastid gene expression, probably by maintaining plastid-encoded RNA polymerase (PEP) activity. The chain is Protein PLASTID TRANSCRIPTIONALLY ACTIVE 7 from Arabidopsis thaliana (Mouse-ear cress).